Consider the following 408-residue polypeptide: NFATC2-interacting protein (408 aa).

The interval 1 to 113 (MAEPVGKRGR…LDPGEAPLVP (113 aa)) is disordered. The segment covering 24 to 40 (QRSPSRGTLDVVSVDLV) has biased composition (low complexity). Phosphoserine occurs at positions 41, 43, 73, 77, 79, 81, and 116. Residues lysine 118 and lysine 120 each participate in a glycyl lysine isopeptide (Lys-Gly) (interchain with G-Cter in SUMO2) cross-link. The segment at 141–205 (EEEVELADSS…TKSRKHTRAL (65 aa)) is disordered. Residues 169–181 (RTKDKEEKKKTEI) show a composition bias toward basic and acidic residues. Phosphoserine occurs at positions 187, 190, and 193. Over residues 196-205 (TKSRKHTRAL) the composition is skewed to basic residues. Positions 197–220 (KSRKHTRALKKLSEVNKRLQDLRS) form a coiled coil. Phosphoserine occurs at positions 209 and 303. Phosphothreonine is present on residues threonine 305 and threonine 307. The 72-residue stretch at 337–408 (LQLRVQGKEK…ESGDLIEVWG (72 aa)) folds into the Ubiquitin-like domain. 2 positions are modified to phosphoserine: serine 358 and serine 379.

As to quaternary structure, interacts with NFATC2, TRAF1, TRAF2 and PRMT1. Interacts with UBE2I/UBC9. Methylation at the N-terminus by PRMT1 modulates interaction with the NFAT complex and results in augmented cytokine production.

The protein localises to the nucleus. It is found in the cytoplasm. In T-helper 2 (Th2) cells, regulates the magnitude of NFAT-driven transcription of a specific subset of cytokine genes, including IL3, IL4, IL5 and IL13, but not IL2. Recruits PRMT1 to the IL4 promoter; this leads to enhancement of histone H4 'Arg-3'-methylation and facilitates subsequent histone acetylation at the IL4 locus, thus promotes robust cytokine expression. Down-regulates formation of poly-SUMO chains by UBE2I/UBC9. This is NFATC2-interacting protein (NFATC2IP) from Macaca fascicularis (Crab-eating macaque).